The sequence spans 142 residues: Large ribosomal subunit protein uL13 (142 aa).

The protein belongs to the universal ribosomal protein uL13 family. In terms of assembly, part of the 50S ribosomal subunit.

This protein is one of the early assembly proteins of the 50S ribosomal subunit, although it is not seen to bind rRNA by itself. It is important during the early stages of 50S assembly. This Shigella boydii serotype 18 (strain CDC 3083-94 / BS512) protein is Large ribosomal subunit protein uL13.